We begin with the raw amino-acid sequence, 432 residues long: Phosphomethylpyrimidine synthase (432 aa).

Substrate-binding positions include Asn-66, Met-95, Tyr-124, His-163, 185 to 187 (SRG), 226 to 229 (DGLR), and Glu-265. Zn(2+) is bound at residue His-269. Tyr-292 lines the substrate pocket. His-333 contacts Zn(2+). The [4Fe-4S] cluster site is built by Cys-409, Cys-412, and Cys-416.

This sequence belongs to the ThiC family. Requires [4Fe-4S] cluster as cofactor.

It carries out the reaction 5-amino-1-(5-phospho-beta-D-ribosyl)imidazole + S-adenosyl-L-methionine = 4-amino-2-methyl-5-(phosphooxymethyl)pyrimidine + CO + 5'-deoxyadenosine + formate + L-methionine + 3 H(+). It functions in the pathway cofactor biosynthesis; thiamine diphosphate biosynthesis. Its function is as follows. Catalyzes the synthesis of the hydroxymethylpyrimidine phosphate (HMP-P) moiety of thiamine from aminoimidazole ribotide (AIR) in a radical S-adenosyl-L-methionine (SAM)-dependent reaction. The protein is Phosphomethylpyrimidine synthase of Desulforamulus reducens (strain ATCC BAA-1160 / DSM 100696 / MI-1) (Desulfotomaculum reducens).